The following is a 351-amino-acid chain: Ribosomal RNA large subunit methyltransferase N (351 aa).

Glu92 acts as the Proton acceptor in catalysis. The Radical SAM core domain maps to Gly105–Glu337. A disulfide bridge connects residues Cys112 and Cys342. Cys119, Cys123, and Cys126 together coordinate [4Fe-4S] cluster. S-adenosyl-L-methionine contacts are provided by residues Gly169–Glu170, Ser201, Ser224–His226, and Asn300. Catalysis depends on Cys342, which acts as the S-methylcysteine intermediate.

Belongs to the radical SAM superfamily. RlmN family. The cofactor is [4Fe-4S] cluster.

It is found in the cytoplasm. The enzyme catalyses adenosine(2503) in 23S rRNA + 2 reduced [2Fe-2S]-[ferredoxin] + 2 S-adenosyl-L-methionine = 2-methyladenosine(2503) in 23S rRNA + 5'-deoxyadenosine + L-methionine + 2 oxidized [2Fe-2S]-[ferredoxin] + S-adenosyl-L-homocysteine. Specifically methylates position 2 of adenine 2503 in 23S rRNA. The chain is Ribosomal RNA large subunit methyltransferase N from Nitrosopumilus maritimus (strain SCM1).